Here is a 95-residue protein sequence, read N- to C-terminus: Large ribosomal subunit protein uL23 (95 aa).

This sequence belongs to the universal ribosomal protein uL23 family. As to quaternary structure, part of the 50S ribosomal subunit. Contacts protein L29, and trigger factor when it is bound to the ribosome.

Its function is as follows. One of the early assembly proteins it binds 23S rRNA. One of the proteins that surrounds the polypeptide exit tunnel on the outside of the ribosome. Forms the main docking site for trigger factor binding to the ribosome. This Bacillus subtilis (strain 168) protein is Large ribosomal subunit protein uL23.